A 145-amino-acid polypeptide reads, in one-letter code: Cystatin-like 1 (145 aa).

A signal peptide spans 1-19; sequence MGIGCWRNPLLLLIALVLS. The Cystatin domain occupies 37–115; it reads SKKNMNSTLN…KKLRKSLICE (79 aa). Asn-42 carries N-linked (GlcNAc...) asparagine glycosylation. 2 disulfide bridges follow: Cys-91–Cys-101 and Cys-114–Cys-134.

It belongs to the cystatin family.

It localises to the secreted. The polypeptide is Cystatin-like 1 (CSTL1) (Homo sapiens (Human)).